A 543-amino-acid polypeptide reads, in one-letter code: Glucose transporter HT1 (543 aa).

Residues Met1 to Thr24 are disordered. The Cytoplasmic segment spans residues Met1–Cys38. The span at Glu7–Ser19 shows a compositional bias: polar residues. A helical membrane pass occupies residues Ile39–Val59. Residues Tyr60–Gly120 lie on the Extracellular side of the membrane. N-linked (GlcNAc...) asparagine glycosylation is found at Asn90 and Asn91. A helical membrane pass occupies residues Leu121–Leu141. Residues Ser142–Lys147 are Cytoplasmic-facing. A helical transmembrane segment spans residues Met148–Thr168. The Extracellular portion of the chain corresponds to Arg169–Thr172. The helical transmembrane segment at Leu173–Ala193 threads the bilayer. Residues Ser194–Val212 are Cytoplasmic-facing. The chain crosses the membrane as a helical span at residues Leu213–Val233. At Lys234–Met248 the chain is on the extracellular side. Residues Gln249–Val269 traverse the membrane as a helical segment. Residues Arg270–Gly300 lie on the Cytoplasmic side of the membrane. A helical transmembrane segment spans residues Pro301 to Met321. Residues Asn322–Glu337 lie on the Extracellular side of the membrane. The chain crosses the membrane as a helical span at residues Gly338–Ser358. Residues Arg359–Gln364 are Cytoplasmic-facing. A helical membrane pass occupies residues Leu365–Val385. Residues Tyr386–Thr400 are Extracellular-facing. Residues Val401–Leu421 form a helical membrane-spanning segment. At Ala422–Ser436 the chain is on the cytoplasmic side. Residues Phe437 to Val457 traverse the membrane as a helical segment. Over Glu458 to Lys470 the chain is Extracellular. A helical membrane pass occupies residues Gly471–Leu491. At Arg492–Ala543 the chain is on the cytoplasmic side. A compositionally biased stretch (polar residues) spans Thr503–Asn519. The segment at Thr503–Ala543 is disordered.

Belongs to the major facilitator superfamily. Sugar transporter (TC 2.A.1.1) family.

Its subcellular location is the membrane. Facilitative glucose transporter. Binds D-fructose and cytochalasin-B, but not D-galactose. The protein is Glucose transporter HT1 (HT1) of Trypanosoma vivax (Duttonella vivax).